Reading from the N-terminus, the 156-residue chain is Transcription antitermination protein NusB (156 aa).

Belongs to the NusB family.

Involved in transcription antitermination. Required for transcription of ribosomal RNA (rRNA) genes. Binds specifically to the boxA antiterminator sequence of the ribosomal RNA (rrn) operons. This chain is Transcription antitermination protein NusB, found in Rickettsia africae (strain ESF-5).